We begin with the raw amino-acid sequence, 490 residues long: Sporulation-specific protein 1 (490 aa).

Residues 18 to 272 (YSIQSCIGRG…AYNLLSFEFV (255 aa)) enclose the Protein kinase domain. Residues 24-32 (IGRGNFGDV) and Lys-47 contribute to the ATP site. Asp-141 (proton acceptor) is an active-site residue.

It belongs to the protein kinase superfamily. STE Ser/Thr protein kinase family. STE20 subfamily.

The protein localises to the nucleus. The protein resides in the cytoplasm. It catalyses the reaction L-seryl-[protein] + ATP = O-phospho-L-seryl-[protein] + ADP + H(+). It carries out the reaction L-threonyl-[protein] + ATP = O-phospho-L-threonyl-[protein] + ADP + H(+). In terms of biological role, serine/threonine protein kinase required for spore wall development. The chain is Sporulation-specific protein 1 (SPS1) from Saccharomyces cerevisiae (strain ATCC 204508 / S288c) (Baker's yeast).